We begin with the raw amino-acid sequence, 144 residues long: Bacilliredoxin BH1716 (144 aa).

This sequence belongs to the bacilliredoxin family.

The polypeptide is Bacilliredoxin BH1716 (Halalkalibacterium halodurans (strain ATCC BAA-125 / DSM 18197 / FERM 7344 / JCM 9153 / C-125) (Bacillus halodurans)).